The following is a 264-amino-acid chain: Thiazole synthase (264 aa).

Lys106 serves as the catalytic Schiff-base intermediate with DXP. Residues Gly167, 193 to 194 (AG), and 215 to 216 (NS) contribute to the 1-deoxy-D-xylulose 5-phosphate site.

Belongs to the ThiG family. Homotetramer. Forms heterodimers with either ThiH or ThiS.

The protein resides in the cytoplasm. It carries out the reaction [ThiS sulfur-carrier protein]-C-terminal-Gly-aminoethanethioate + 2-iminoacetate + 1-deoxy-D-xylulose 5-phosphate = [ThiS sulfur-carrier protein]-C-terminal Gly-Gly + 2-[(2R,5Z)-2-carboxy-4-methylthiazol-5(2H)-ylidene]ethyl phosphate + 2 H2O + H(+). The protein operates within cofactor biosynthesis; thiamine diphosphate biosynthesis. In terms of biological role, catalyzes the rearrangement of 1-deoxy-D-xylulose 5-phosphate (DXP) to produce the thiazole phosphate moiety of thiamine. Sulfur is provided by the thiocarboxylate moiety of the carrier protein ThiS. In vitro, sulfur can be provided by H(2)S. The polypeptide is Thiazole synthase (Prochlorococcus marinus (strain MIT 9215)).